A 122-amino-acid chain; its full sequence is Large ribosomal subunit protein uL14 (122 aa).

Belongs to the universal ribosomal protein uL14 family. As to quaternary structure, part of the 50S ribosomal subunit. Forms a cluster with proteins L3 and L19. In the 70S ribosome, L14 and L19 interact and together make contacts with the 16S rRNA in bridges B5 and B8.

In terms of biological role, binds to 23S rRNA. Forms part of two intersubunit bridges in the 70S ribosome. In Bdellovibrio bacteriovorus (strain ATCC 15356 / DSM 50701 / NCIMB 9529 / HD100), this protein is Large ribosomal subunit protein uL14.